The chain runs to 167 residues: UPF0225 protein VV1358 (167 aa).

This sequence belongs to the UPF0225 family.

This chain is UPF0225 protein VV1358, found in Vibrio vulnificus (strain YJ016).